The chain runs to 732 residues: TIR domain-containing adapter molecule 1 (732 aa).

The tract at residues 1–153 (MDNPGPSLRG…CSSDIKGDPS (153 aa)) is TRIF-NTD. The TRAF6-binding signature appears at 84-91 (EGPEEPPD). Positions 144–191 (CSSDIKGDPSGFQPLHSHQGSLQPPSASPAVTRSQPRPIDTPDWSWGH) are disordered. A compositionally biased stretch (polar residues) spans 159 to 178 (HSHQGSLQPPSASPAVTRSQ). The short motif at 206-209 (LEIS) is the pLxIS motif element. Ser-209 bears the Phosphoserine mark. A Glycyl lysine isopeptide (Lys-Gly) (interchain with G-Cter in ubiquitin) cross-link involves residue Lys-228. 2 consecutive short sequence motifs (TRAF6-binding) follow at residues 247–254 (QEPEEISW) and 296–306 (HCPIECTELST). Residues 305-331 (STNSRSPLTSTTESVGKQWPITSQRSP) show a composition bias toward polar residues. The segment at 305–389 (STNSRSPLTS…TSTSPVLDHS (85 aa)) is disordered. The span at 345-359 (SSSPPAQPPSLQASP) shows a compositional bias: low complexity. One can recognise a TIR domain in the interval 395-534 (KFYNFVVIHA…KVANTFKTQK (140 aa)). The tract at residues 514 to 713 (WLDEHSPIFA…SSDDKTECSE (200 aa)) is sufficient to induce apoptosis. Disordered regions lie at residues 603–679 (TPSW…GPQP) and 696–732 (MWGH…ETPE). Pro residues-rich tracts occupy residues 604–615 (PSWPGCPQPIPS) and 625–657 (PYSP…PPVS). Over residues 658–671 (SPQSQSFPSASSPA) the composition is skewed to low complexity.

In terms of assembly, homodimer. Found in a multi-helicase-TICAM1 complex at least composed of DHX36, DDX1, DDX21 and TICAM1; this complex exists in resting cells with or without poly(I:C) RNA ligand stimulation. Interacts (via TIR domain) with DDX21 (via C-terminus). Interacts (via TIR domain) with DHX36 (via C-terminus). Interacts with AZI2 and IRF7. Interacts (when phosphorylated) with IRF3; following activation and phosphorylation on the pLxIS motif by TBK1, recruits IRF3. Interacts with TICAM2 in TLR4 recruitment. Interaction with PIAS4 inhibits the TICAM1-induced NF-kappa-B, IRF and IFNB1 activation. Interacts with IKBKB and IKBKE. Interaction with SARM1 blocks TICAM1-dependent transcription factor activation. Interacts with TRAF3. Interacts with TRAFD1. Interacts with UBQLN1 (via UBA domain). Interacts with TBK1, TRAF6 and RIPK1 and these interactions are enhanced in the presence of WDFY1. Interacts (via the TIR domain) with TLR3 in response to poly(I:C) and this interaction is enhanced in the presence of WDFY1. Interacts with TLR4 in response to poly(I:C) in a WDFY1-dependent manner. Interacts with WDFY1 in response to poly(I:C). Interacts with TRIM56. Interacts (via the TIR domain) with TLR5. Interacts with TRIM8. Interacts with TAX1BP1 and TRIM32; these interactions target TICAM1 to TAX1BP1-mediated selective autophagic degradation. Interacts with DDX50. Post-translationally, phosphorylated by TBK1. Following activation, phosphorylated by TBK1 at Ser-209 in the pLxIS motif. The phosphorylated pLxIS motif constitutes an IRF3-binding motif, leading to recruitment of the transcription factor IRF3 to induce type-I interferons and other cytokines. Polyubiquitinated at Lys-228 by TRIM38 with 'Lys-48'-linked chains, leading to proteasomal degradation. Polyubiquitinated with 'Lys-6'- and 'Lys-33'-linked chains in a TRIM8-dependent manner; ubiquitination disrupts the interaction with TBK1 and subsequent interferon production.

The protein resides in the cytoplasm. It localises to the cytosol. It is found in the cytoplasmic vesicle. The protein localises to the autophagosome. Its subcellular location is the mitochondrion. Its function is as follows. Involved in innate immunity against invading pathogens. Adapter used by TLR3, TLR4 (through TICAM2) and TLR5 to mediate NF-kappa-B and interferon-regulatory factor (IRF) activation, and to induce apoptosis. Ligand binding to these receptors results in TRIF recruitment through its TIR domain. Distinct protein-interaction motifs allow recruitment of the effector proteins TBK1, TRAF6 and RIPK1, which in turn, lead to the activation of transcription factors IRF3 and IRF7, NF-kappa-B and FADD respectively. Phosphorylation by TBK1 on the pLxIS motif leads to recruitment and subsequent activation of the transcription factor IRF3 to induce expression of type I interferon and exert a potent immunity against invading pathogens. Component of a multi-helicase-TICAM1 complex that acts as a cytoplasmic sensor of viral double-stranded RNA (dsRNA) and plays a role in the activation of a cascade of antiviral responses including the induction of pro-inflammatory cytokines. The polypeptide is TIR domain-containing adapter molecule 1 (Ticam1) (Mus musculus (Mouse)).